A 543-amino-acid chain; its full sequence is Protein lin-14 (543 aa).

Disordered stretches follow at residues P165–H228 and A268–P291. Polar residues predominate over residues S177–I213. Positions A268 to A282 are enriched in low complexity.

Post-translationally, cleaved by caspase ced-3 in vitro.

It localises to the nucleus. Functionally, heterochronic protein which controls the choice of stage specific cell fates. Involved in the temporal progression of vulval fate patterning, possibly by inhibiting lin-12. Acts as a transcription factor involved in the stage-specific repression of insulin/insulin-like growth factor gene ins-33. In Caenorhabditis briggsae, this protein is Protein lin-14 (lin-14).